We begin with the raw amino-acid sequence, 466 residues long: UDP-N-acetylmuramoylalanine--D-glutamate ligase (466 aa).

An ATP-binding site is contributed by 124–130; it reads GSDGKTT.

This sequence belongs to the MurCDEF family.

The protein localises to the cytoplasm. The catalysed reaction is UDP-N-acetyl-alpha-D-muramoyl-L-alanine + D-glutamate + ATP = UDP-N-acetyl-alpha-D-muramoyl-L-alanyl-D-glutamate + ADP + phosphate + H(+). Its pathway is cell wall biogenesis; peptidoglycan biosynthesis. Functionally, cell wall formation. Catalyzes the addition of glutamate to the nucleotide precursor UDP-N-acetylmuramoyl-L-alanine (UMA). The chain is UDP-N-acetylmuramoylalanine--D-glutamate ligase from Acetivibrio thermocellus (strain ATCC 27405 / DSM 1237 / JCM 9322 / NBRC 103400 / NCIMB 10682 / NRRL B-4536 / VPI 7372) (Clostridium thermocellum).